Reading from the N-terminus, the 88-residue chain is UPF0250 protein Shew_2940 (88 aa).

The protein belongs to the UPF0250 family.

The protein is UPF0250 protein Shew_2940 of Shewanella loihica (strain ATCC BAA-1088 / PV-4).